We begin with the raw amino-acid sequence, 154 residues long: Endoribonuclease YbeY (154 aa).

The Zn(2+) site is built by H117, H121, and H127.

The protein belongs to the endoribonuclease YbeY family. Requires Zn(2+) as cofactor.

It localises to the cytoplasm. Its function is as follows. Single strand-specific metallo-endoribonuclease involved in late-stage 70S ribosome quality control and in maturation of the 3' terminus of the 16S rRNA. The sequence is that of Endoribonuclease YbeY from Mycoplasma pneumoniae (strain ATCC 29342 / M129 / Subtype 1) (Mycoplasmoides pneumoniae).